A 668-amino-acid polypeptide reads, in one-letter code: Packaging protein UL32 homolog (668 aa).

The segment covering 1–10 (MNPSTHVSSN) has biased composition (polar residues). Residues 1–35 (MNPSTHVSSNGPTTPPHGPHTTFLPPTSPAPSTSS) form a disordered region. Low complexity predominate over residues 19–35 (PHTTFLPPTSPAPSTSS). Cysteine 200, cysteine 203, histidine 276, and cysteine 282 together coordinate Zn(2+). The zinc finger 1 stretch occupies residues 200-282 (CNLCAIISIC…FHLHFFINRC (83 aa)). 2 stretches are compositionally biased toward basic and acidic residues: residues 392–401 (SEREDARMMM) and 410–419 (GEKGGDDPGR). Positions 392-430 (SEREDARMMMEEEEDEEGGEKGGDDPGRHNGGGTSGGFS) are disordered. Cysteine 459, cysteine 462, histidine 567, and cysteine 574 together coordinate Zn(2+). The interval 459–574 (CLLCELMACS…YKHFFCDPQC (116 aa)) is zinc finger 2.

It belongs to the herpesviridae UL32 protein family.

It localises to the host cytoplasm. It is found in the host nucleus. In terms of biological role, plays a role in efficient localization of neo-synthesized capsids to nuclear replication compartments, thereby controlling cleavage and packaging of virus genomic DNA. This Homo sapiens (Human) protein is Packaging protein UL32 homolog (UL52).